The chain runs to 62 residues: Conotoxin TeAr151 (62 aa).

The N-terminal stretch at 1-22 is a signal peptide; it reads MRCLPVFVVLLLLIASAPSVDA. The propeptide occupies 23 to 47; the sequence is QPKTKDDVPLAPLHDNIQNTLQTLR. Position 55 is a methionine sulfoxide; partial (methionine 55). At serine 60 the chain carries Serine amide.

It belongs to the conotoxin T superfamily. Contains 2 disulfide bonds. In terms of processing, contains 2 disulfide bonds that can be either 'C1-C3, C2-C4' or 'C1-C4, C2-C3', since these disulfide connectivities have been observed for conotoxins with cysteine framework V (for examples, see AC P0DQQ7 and AC P81755).. As to expression, expressed by the venom duct. Is mostly present in part 5 of the venom duct (distal part near the pharynx), and less abundantly present in part 4 of the venom duct.

The protein resides in the secreted. This chain is Conotoxin TeAr151, found in Conus textile (Cloth-of-gold cone).